We begin with the raw amino-acid sequence, 303 residues long: uncharacterized protein (303 aa).

This is an uncharacterized protein from Rickettsia prowazekii (strain Madrid E).